A 72-amino-acid chain; its full sequence is UPF0270 protein YheU (72 aa).

The protein belongs to the UPF0270 family.

The sequence is that of UPF0270 protein YheU from Escherichia fergusonii (strain ATCC 35469 / DSM 13698 / CCUG 18766 / IAM 14443 / JCM 21226 / LMG 7866 / NBRC 102419 / NCTC 12128 / CDC 0568-73).